The following is a 932-amino-acid chain: Protein translocase subunit SecA, chloroplastic (932 aa).

Position 95 to 102 (95 to 102) interacts with ATP; the sequence is MRTGEGKT. Basic and acidic residues predominate over residues 632–641; that stretch reads HESRRVDNQL. Residues 632 to 653 form a disordered region; sequence HESRRVDNQLRGRSGRQGDPGS.

This sequence belongs to the SecA family.

It localises to the plastid. It is found in the chloroplast stroma. The protein resides in the chloroplast thylakoid membrane. It carries out the reaction ATP + H2O + chloroplast-proteinSide 1 = ADP + phosphate + chloroplast-proteinSide 2.. Functionally, has a central role in coupling the hydrolysis of ATP to the transfer of proteins across the thylakoid membrane. The sequence is that of Protein translocase subunit SecA, chloroplastic from Ostreococcus lucimarinus (strain CCE9901).